Here is a 139-residue protein sequence, read N- to C-terminus: Transcription antitermination protein NusB (139 aa).

It belongs to the NusB family.

In terms of biological role, involved in transcription antitermination. Required for transcription of ribosomal RNA (rRNA) genes. Binds specifically to the boxA antiterminator sequence of the ribosomal RNA (rrn) operons. The chain is Transcription antitermination protein NusB from Idiomarina loihiensis (strain ATCC BAA-735 / DSM 15497 / L2-TR).